We begin with the raw amino-acid sequence, 210 residues long: ATP-dependent Clp protease proteolytic subunit (210 aa).

Ser106 functions as the Nucleophile in the catalytic mechanism. Residue His131 is part of the active site.

The protein belongs to the peptidase S14 family. Fourteen ClpP subunits assemble into 2 heptameric rings which stack back to back to give a disk-like structure with a central cavity, resembling the structure of eukaryotic proteasomes.

It localises to the cytoplasm. The enzyme catalyses Hydrolysis of proteins to small peptides in the presence of ATP and magnesium. alpha-casein is the usual test substrate. In the absence of ATP, only oligopeptides shorter than five residues are hydrolyzed (such as succinyl-Leu-Tyr-|-NHMec, and Leu-Tyr-Leu-|-Tyr-Trp, in which cleavage of the -Tyr-|-Leu- and -Tyr-|-Trp bonds also occurs).. In terms of biological role, cleaves peptides in various proteins in a process that requires ATP hydrolysis. Has a chymotrypsin-like activity. Plays a major role in the degradation of misfolded proteins. This chain is ATP-dependent Clp protease proteolytic subunit, found in Bartonella quintana (strain Toulouse) (Rochalimaea quintana).